We begin with the raw amino-acid sequence, 170 residues long: Zinc finger A20 and AN1 domain-containing stress-associated protein 6 (170 aa).

Residues 10–44 (PESNRLCVNNCGFLGSSATMNLCSNCYGDLCLKQQ) form an A20-type zinc finger. Cys16, Cys20, Cys32, and Cys35 together coordinate Zn(2+). The disordered stretch occupies residues 53 to 76 (TVESSLSVSPPSSSSSEISSPIIP). The segment at 105–151 (QQRPNRCTTCRKRVGLTGFKCRCGTMFCGVHRYPEIHGCSYDFKSAG) adopts an AN1-type zinc-finger fold. 8 residues coordinate Zn(2+): Cys111, Cys114, Cys125, Cys127, Cys132, His135, His141, and Cys143.

In terms of biological role, may be involved in environmental stress response. This chain is Zinc finger A20 and AN1 domain-containing stress-associated protein 6 (SAP6), found in Arabidopsis thaliana (Mouse-ear cress).